We begin with the raw amino-acid sequence, 95 residues long: uncharacterized protein (95 aa).

Positions 46-68 (GDRGTNGRTEAEHDGIPHSRKKV) are disordered.

This is an uncharacterized protein from Schizosaccharomyces pombe (strain 972 / ATCC 24843) (Fission yeast).